The chain runs to 515 residues: 3-[(3aS,4S,7aS)-7a-methyl-1,5-dioxo-octahydro-1H-inden-4-yl]propanoyl:CoA ligase (515 aa).

ATP contacts are provided by residues 185 to 193, D398, R413, and K504; that span reads TSGTTGRSK.

This sequence belongs to the ATP-dependent AMP-binding enzyme family.

It catalyses the reaction 3-[(3aS,4S,7aS)-7a-methyl-1,5-dioxo-octahydro-1H-inden-4-yl]propanoate + ATP + CoA = 3-[(3aS,4S,7aS)-7a-methyl-1,5-dioxo-octahydro-1H-inden-4-yl]propanoyl-CoA + AMP + diphosphate. Its function is as follows. Involved in the catabolism of the rings C and D of cholesterol. Catalyzes the ATP-dependent CoA thioesterification of 3aalpha-H-4alpha(3'-propanoate)-7abeta-methylhexahydro-1,5-indanedione (HIP). The sequence is that of 3-[(3aS,4S,7aS)-7a-methyl-1,5-dioxo-octahydro-1H-inden-4-yl]propanoyl:CoA ligase from Rhodococcus jostii (strain RHA1).